We begin with the raw amino-acid sequence, 159 residues long: Transcriptional repressor NrdR (159 aa).

The segment at 3–34 (CPFCRHDDTQVVDSRVSEDGAAIRRRRRCSAC) is a zinc-finger region. The ATP-cone domain occupies 49–139 (PAVVKKDGSR…VYRRFEDVSE (91 aa)).

It belongs to the NrdR family. Requires Zn(2+) as cofactor.

Negatively regulates transcription of bacterial ribonucleotide reductase nrd genes and operons by binding to NrdR-boxes. This chain is Transcriptional repressor NrdR, found in Burkholderia cenocepacia (strain HI2424).